The following is a 253-amino-acid chain: Imidazole glycerol phosphate synthase subunit HisF (253 aa).

Active-site residues include aspartate 11 and aspartate 130.

Belongs to the HisA/HisF family. Heterodimer of HisH and HisF.

The protein localises to the cytoplasm. The enzyme catalyses 5-[(5-phospho-1-deoxy-D-ribulos-1-ylimino)methylamino]-1-(5-phospho-beta-D-ribosyl)imidazole-4-carboxamide + L-glutamine = D-erythro-1-(imidazol-4-yl)glycerol 3-phosphate + 5-amino-1-(5-phospho-beta-D-ribosyl)imidazole-4-carboxamide + L-glutamate + H(+). The protein operates within amino-acid biosynthesis; L-histidine biosynthesis; L-histidine from 5-phospho-alpha-D-ribose 1-diphosphate: step 5/9. Its function is as follows. IGPS catalyzes the conversion of PRFAR and glutamine to IGP, AICAR and glutamate. The HisF subunit catalyzes the cyclization activity that produces IGP and AICAR from PRFAR using the ammonia provided by the HisH subunit. This chain is Imidazole glycerol phosphate synthase subunit HisF, found in Roseobacter denitrificans (strain ATCC 33942 / OCh 114) (Erythrobacter sp. (strain OCh 114)).